The primary structure comprises 592 residues: K(+) efflux antiporter 4 (592 aa).

The first 35 residues, M1 to Y35, serve as a signal peptide directing secretion. A run of 12 helical transmembrane segments spans residues L169–C189, P193–V213, T221–A241, A248–T268, G279–M299, V313–L333, V343–L363, L388–L408, N437–W457, I462–V482, T491–S511, and L535–L555.

It belongs to the monovalent cation:proton antiporter 2 (CPA2) transporter (TC 2.A.37) family. KEA (TC 2.A.37.1) subfamily. In terms of tissue distribution, expressed in roots, stems, leaves, flowers and silique.

The protein localises to the golgi apparatus membrane. The protein resides in the golgi apparatus. It localises to the trans-Golgi network membrane. Its subcellular location is the prevacuolar compartment membrane. It is found in the endomembrane system. It carries out the reaction K(+)(in) + H(+)(out) = K(+)(out) + H(+)(in). Electroneutral K(+)/H(+) efflux antiporter involved in K(+) homeostasis and osmotic adjustment. Together with KEA5 and KEA6, promotes growth and development, and facilitates endosomal pH and ions homeostasis, as well as salt tolerance (e.g. K(+), NaCl and LiCl), probably by supporting cell wall biosynthesis during rapid etiolated seedling growth. In Arabidopsis thaliana (Mouse-ear cress), this protein is K(+) efflux antiporter 4.